A 233-amino-acid polypeptide reads, in one-letter code: Uridylate kinase (233 aa).

Residues 8–11, glycine 51, and arginine 55 contribute to the ATP site; that span reads KLSG. UMP-binding positions include aspartate 68 and 129–136; that span reads TSNPFFTT. ATP-binding residues include threonine 156, tyrosine 162, and aspartate 165.

Belongs to the UMP kinase family. Homohexamer.

It localises to the cytoplasm. It catalyses the reaction UMP + ATP = UDP + ADP. The protein operates within pyrimidine metabolism; CTP biosynthesis via de novo pathway; UDP from UMP (UMPK route): step 1/1. With respect to regulation, inhibited by UTP. Its function is as follows. Catalyzes the reversible phosphorylation of UMP to UDP. This Pseudothermotoga lettingae (strain ATCC BAA-301 / DSM 14385 / NBRC 107922 / TMO) (Thermotoga lettingae) protein is Uridylate kinase.